The primary structure comprises 196 residues: Dephospho-CoA kinase (196 aa).

Positions 3-196 (RIGLTGNIGC…KVYEELTRDP (194 aa)) constitute a DPCK domain. Residue 11-16 (GCGKST) coordinates ATP.

Belongs to the CoaE family.

Its subcellular location is the cytoplasm. It catalyses the reaction 3'-dephospho-CoA + ATP = ADP + CoA + H(+). Its pathway is cofactor biosynthesis; coenzyme A biosynthesis; CoA from (R)-pantothenate: step 5/5. Catalyzes the phosphorylation of the 3'-hydroxyl group of dephosphocoenzyme A to form coenzyme A. The chain is Dephospho-CoA kinase from Aquifex aeolicus (strain VF5).